We begin with the raw amino-acid sequence, 425 residues long: 5-aminovalerate aminotransferase DavT (425 aa).

Pyridoxal 5'-phosphate-binding positions include 112–113, Tyr139, and 240–243; these read GS and DEVQ. Residue Lys269 is modified to N6-(pyridoxal phosphate)lysine. Thr298 serves as a coordination point for pyridoxal 5'-phosphate.

It belongs to the class-III pyridoxal-phosphate-dependent aminotransferase family. The cofactor is pyridoxal 5'-phosphate.

The enzyme catalyses 5-aminopentanoate + 2-oxoglutarate = 5-oxopentanoate + L-glutamate. Its function is as follows. Catalyzes the conversion of 5-aminovalerate to 5-oxopentanoate. The protein is 5-aminovalerate aminotransferase DavT (davT) of Pseudomonas putida (strain ATCC 47054 / DSM 6125 / CFBP 8728 / NCIMB 11950 / KT2440).